The primary structure comprises 195 residues: Heavy metal-associated isoprenylated plant protein 18 (195 aa).

2 disordered regions span residues Asp-36 to Thr-76 and Glu-145 to Ser-172. 2 stretches are compositionally biased toward basic and acidic residues: residues Thr-47–Thr-76 and Glu-145–Asp-157. Residues Thr-78–Lys-149 form the HMA domain. Cys-192 is modified (cysteine methyl ester). Residue Cys-192 is the site of S-farnesyl cysteine attachment. The propeptide at Ser-193–Ser-195 is removed in mature form.

It belongs to the HIPP family.

Functionally, probable heavy-metal-binding protein. Required for female gametophyte development and function. This is Heavy metal-associated isoprenylated plant protein 18 from Arabidopsis thaliana (Mouse-ear cress).